The chain runs to 207 residues: Ubiquitin-conjugating enzyme E2 E3 (207 aa).

Positions 1–10 (MSSDRQRSDD) are enriched in basic and acidic residues. Residues 1–63 (MSSDRQRSDD…KTTAKLSTSA (63 aa)) are disordered. Serine 2 carries the post-translational modification N-acetylserine. Serine 8 carries the phosphoserine modification. The segment covering 50-63 (KLSSKTTAKLSTSA) has biased composition (low complexity). The region spanning 61-207 (TSAKRIQKEL…ARQWTKRYAT (147 aa)) is the UBC core domain. Cysteine 145 functions as the Glycyl thioester intermediate in the catalytic mechanism.

Belongs to the ubiquitin-conjugating enzyme family. The ubiquitin-loaded form interacts specifically with importin-11 (IPO11), leading to its import into the nucleus. Interacts with NEDD4L.

It localises to the nucleus. The protein resides in the cytoplasm. The enzyme catalyses S-ubiquitinyl-[E1 ubiquitin-activating enzyme]-L-cysteine + [E2 ubiquitin-conjugating enzyme]-L-cysteine = [E1 ubiquitin-activating enzyme]-L-cysteine + S-ubiquitinyl-[E2 ubiquitin-conjugating enzyme]-L-cysteine.. It participates in protein modification; protein ubiquitination. Functionally, accepts ubiquitin from the E1 complex and catalyzes its covalent attachment to other proteins. In vitro catalyzes 'Lys-11'- and 'Lys-48'-, as well as 'Lys-63'-linked polyubiquitination. Participates in the regulation of transepithelial sodium transport in renal cells. This Bos taurus (Bovine) protein is Ubiquitin-conjugating enzyme E2 E3 (UBE2E3).